The chain runs to 273 residues: tRNA (guanine-N(7)-)-methyltransferase (273 aa).

Positions 1-31 (MSQHPDINTNVDATSLTDDQKSLDTNATSGN) are enriched in polar residues. The segment at 1–36 (MSQHPDINTNVDATSLTDDQKSLDTNATSGNEVAPD) is disordered. S-adenosyl-L-methionine contacts are provided by Glu-105, Glu-130, Asp-157, and Asp-179. Residue Asp-179 is part of the active site. Substrate contacts are provided by residues Lys-183, Asp-215, and 252 to 255 (TKFE).

Belongs to the class I-like SAM-binding methyltransferase superfamily. TrmB family.

It carries out the reaction guanosine(46) in tRNA + S-adenosyl-L-methionine = N(7)-methylguanosine(46) in tRNA + S-adenosyl-L-homocysteine. Its pathway is tRNA modification; N(7)-methylguanine-tRNA biosynthesis. Catalyzes the formation of N(7)-methylguanine at position 46 (m7G46) in tRNA. This chain is tRNA (guanine-N(7)-)-methyltransferase, found in Psychrobacter cryohalolentis (strain ATCC BAA-1226 / DSM 17306 / VKM B-2378 / K5).